Consider the following 908-residue polypeptide: Autophagy-related protein 9 (908 aa).

At 1-299 the chain is on the cytoplasmic side; sequence MTDSQDKVNG…NGFYCIITEK (299 aa). Residues 37–188 are disordered; that stretch reads MSHITMPTEQ…TKSTKNPSES (152 aa). Positions 103 to 124 are enriched in acidic residues; the sequence is SEPDEGGTEEDEVHLEEEDFSD. Residues 126 to 139 are compositionally biased toward polar residues; sequence DLASSVSKYGQPSS. A compositionally biased stretch (basic and acidic residues) spans 146–156; the sequence is LSNRDSNRGSD. Positions 176–187 are enriched in polar residues; it reads TGATKSTKNPSE. A helical membrane pass occupies residues 300–320; sequence VIHLATILFVVFISTYMGHCI. At 321–349 the chain is on the lumenal side; it reads DYSRLSSSHTFEEIHIEQCYKTQISPTAK. A helical transmembrane segment spans residues 350–370; that stretch reads VFLWIFYAFIGLKVLQLYFDV. The Cytoplasmic portion of the chain corresponds to 371–507; sequence KALKDIRNFY…EYLGEELKKR (137 aa). An intramembrane segment occupies 508–528; the sequence is FVLAGFLNIILSPFLVTYFVL. Residues 529–594 are Cytoplasmic-facing; that stretch reads LNFFRYFNEY…QFPNTLLSLT (66 aa). A helical membrane pass occupies residues 595–615; sequence LSFIQFVSGSFVAILGILTIF. The Lumenal portion of the chain corresponds to 616–629; sequence DPDNFLNFEITPDR. Residues 630–650 traverse the membrane as a helical segment; sequence TVLFYMTVFGTLWAVCHSSIN. Residues 651–696 are Cytoplasmic-facing; the sequence is DEYTVLKPEETLEELVSYTHYAPKEWKGKYHTEDIKNEFCRLYNLR. The stretch at 697-717 is an intramembrane region; sequence ITLLLRELVSIIITPFILWFS. The Cytoplasmic portion of the chain corresponds to 718-908; sequence LPKNSERIID…QYYKKSDRNR (191 aa).

This sequence belongs to the ATG9 family. In terms of assembly, homotrimer; forms a homotrimer with a central pore that forms a path between the two membrane leaflets. In terms of processing, phosphorylated by ATG1. ATG1 phosphorylation is required for preautophagosome elongation.

The protein localises to the preautophagosomal structure membrane. Its subcellular location is the cytoplasmic vesicle membrane. It localises to the golgi apparatus membrane. It is found in the endoplasmic reticulum membrane. The enzyme catalyses a 1,2-diacyl-sn-glycero-3-phosphocholine(in) = a 1,2-diacyl-sn-glycero-3-phosphocholine(out). The catalysed reaction is a 1,2-diacyl-sn-glycero-3-phospho-L-serine(in) = a 1,2-diacyl-sn-glycero-3-phospho-L-serine(out). It carries out the reaction a 1,2-diacyl-sn-glycero-3-phosphoethanolamine(in) = a 1,2-diacyl-sn-glycero-3-phosphoethanolamine(out). It catalyses the reaction a 1,2-diacyl-sn-glycero-3-phospho-(1D-myo-inositol-3-phosphate)(in) = a 1,2-diacyl-sn-glycero-3-phospho-(1D-myo-inositol-3-phosphate)(out). Its function is as follows. Phospholipid scramblase involved in autophagy and cytoplasm to vacuole transport (Cvt) vesicle formation. Cycles between the preautophagosomal structure/phagophore assembly site (PAS) and the cytoplasmic vesicle pool and supplies membrane for the growing autophagosome. Lipid scramblase activity plays a key role in preautophagosomal structure/phagophore assembly by distributing the phospholipids that arrive through ATG2 from the cytoplasmic to the luminal leaflet of the bilayer, thereby driving autophagosomal membrane expansion. Required for mitophagy. Also involved in endoplasmic reticulum-specific autophagic process and is essential for the survival of cells subjected to severe ER stress. Different machineries are required for anterograde trafficking to the PAS during either the Cvt pathway or bulk autophagy and for retrograde trafficking. The chain is Autophagy-related protein 9 (ATG9) from Kluyveromyces lactis (strain ATCC 8585 / CBS 2359 / DSM 70799 / NBRC 1267 / NRRL Y-1140 / WM37) (Yeast).